We begin with the raw amino-acid sequence, 194 residues long: Oligoribonuclease (194 aa).

Positions 11 to 174 (LIWIDLEMTG…SDVRDSIDEL (164 aa)) constitute an Exonuclease domain. Residue Tyr-132 is part of the active site.

The protein belongs to the oligoribonuclease family.

Its subcellular location is the cytoplasm. 3'-to-5' exoribonuclease specific for small oligoribonucleotides. The polypeptide is Oligoribonuclease (Xanthomonas campestris pv. campestris (strain ATCC 33913 / DSM 3586 / NCPPB 528 / LMG 568 / P 25)).